A 233-amino-acid polypeptide reads, in one-letter code: 5'-methylthioadenosine/S-adenosylhomocysteine nucleosidase (233 aa).

Glutamate 12 acts as the Proton acceptor in catalysis. Substrate contacts are provided by residues glycine 78, isoleucine 153, and 174 to 175 (ME). Aspartate 198 acts as the Proton donor in catalysis.

The protein belongs to the PNP/UDP phosphorylase family. MtnN subfamily.

It catalyses the reaction S-adenosyl-L-homocysteine + H2O = S-(5-deoxy-D-ribos-5-yl)-L-homocysteine + adenine. The enzyme catalyses S-methyl-5'-thioadenosine + H2O = 5-(methylsulfanyl)-D-ribose + adenine. The catalysed reaction is 5'-deoxyadenosine + H2O = 5-deoxy-D-ribose + adenine. The protein operates within amino-acid biosynthesis; L-methionine biosynthesis via salvage pathway; S-methyl-5-thio-alpha-D-ribose 1-phosphate from S-methyl-5'-thioadenosine (hydrolase route): step 1/2. Functionally, catalyzes the irreversible cleavage of the glycosidic bond in both 5'-methylthioadenosine (MTA) and S-adenosylhomocysteine (SAH/AdoHcy) to adenine and the corresponding thioribose, 5'-methylthioribose and S-ribosylhomocysteine, respectively. Also cleaves 5'-deoxyadenosine, a toxic by-product of radical S-adenosylmethionine (SAM) enzymes, into 5-deoxyribose and adenine. In Exiguobacterium sp. (strain ATCC BAA-1283 / AT1b), this protein is 5'-methylthioadenosine/S-adenosylhomocysteine nucleosidase.